Here is a 232-residue protein sequence, read N- to C-terminus: Ribonuclease 3 (232 aa).

An RNase III domain is found at Q5–D134. Residue E47 coordinates Mg(2+). Residue D51 is part of the active site. D120 and E123 together coordinate Mg(2+). Residue E123 is part of the active site. The DRBM domain maps to D160–D229.

This sequence belongs to the ribonuclease III family. As to quaternary structure, homodimer. Mg(2+) is required as a cofactor.

Its subcellular location is the cytoplasm. It catalyses the reaction Endonucleolytic cleavage to 5'-phosphomonoester.. In terms of biological role, digests double-stranded RNA. Involved in the processing of primary rRNA transcript to yield the immediate precursors to the large and small rRNAs (23S and 16S). Processes some mRNAs, and tRNAs when they are encoded in the rRNA operon. Processes pre-crRNA and tracrRNA of type II CRISPR loci if present in the organism. In Streptococcus pneumoniae (strain CGSP14), this protein is Ribonuclease 3.